Here is a 358-residue protein sequence, read N- to C-terminus: Uroporphyrinogen decarboxylase (358 aa).

Substrate is bound by residues 28–32, Asp-78, Tyr-154, Ser-208, and His-324; that span reads RQAGR.

The protein belongs to the uroporphyrinogen decarboxylase family. Homodimer.

It is found in the cytoplasm. The enzyme catalyses uroporphyrinogen III + 4 H(+) = coproporphyrinogen III + 4 CO2. It functions in the pathway porphyrin-containing compound metabolism; protoporphyrin-IX biosynthesis; coproporphyrinogen-III from 5-aminolevulinate: step 4/4. Catalyzes the decarboxylation of four acetate groups of uroporphyrinogen-III to yield coproporphyrinogen-III. In Acidiphilium cryptum (strain JF-5), this protein is Uroporphyrinogen decarboxylase.